A 93-amino-acid chain; its full sequence is Large ribosomal subunit protein uL23 (93 aa).

The protein belongs to the universal ribosomal protein uL23 family. Part of the 50S ribosomal subunit. Contacts protein L29, and trigger factor when it is bound to the ribosome.

In terms of biological role, one of the early assembly proteins it binds 23S rRNA. One of the proteins that surrounds the polypeptide exit tunnel on the outside of the ribosome. Forms the main docking site for trigger factor binding to the ribosome. The sequence is that of Large ribosomal subunit protein uL23 from Helicobacter pylori (strain P12).